Reading from the N-terminus, the 225-residue chain is 2-amino-5-formylamino-6-ribosylaminopyrimidin-4(3H)-one 5'-monophosphate deformylase (225 aa).

The Fe cation site is built by Glu28, His30, Asp39, and His107.

It belongs to the creatininase superfamily. FAPy deformylase family. Homodimer. Requires Fe(2+) as cofactor. It depends on Zn(2+) as a cofactor.

The enzyme catalyses 2-amino-5-formylamino-6-(5-phospho-D-ribosylamino)pyrimidin-4(3H)-one + H2O = 2,5-diamino-6-(1-D-ribosylamino)pyrimidin-4(3H)-one 5'-phosphate + formate + H(+). It participates in cofactor biosynthesis; coenzyme F420 biosynthesis. The protein operates within cofactor biosynthesis; riboflavin biosynthesis. Its function is as follows. Catalyzes the hydrolysis of the formamide of 2-amino-5-formylamino-6-ribosylamino-4(3H)-pyrimidinone 5'-monophosphate (FAPy) to form 2,5-diamino-6-ribosylamino-4(3H)-pyrimidinone 5'-phosphate (APy). In Methanocaldococcus fervens (strain DSM 4213 / JCM 15782 / AG86) (Methanococcus fervens), this protein is 2-amino-5-formylamino-6-ribosylaminopyrimidin-4(3H)-one 5'-monophosphate deformylase.